Here is a 367-residue protein sequence, read N- to C-terminus: MAQMLLRGSMSRVAGRCRSEFGDLPNWCLSTTTHHQEDLKKLGKILTEAATEDKTVIITTLNKAWSEPNSTFDLFLHSFHVGKGTKPLLRHLVVACLDEEAYSRCSEVHPHRCYFMKTPGIDFAGDKMFMTPDYLKMMWRRIEFLGTLLKLRYNFIFTIPFPRLSKEVDFQIACDRYSGDDKDIHNAVNGGFAFVKANQRTIDFYNYWYMSRLRYPDRHDQDVLDQIKGGGYPAKIGLKMRFLDTKYFGGFCEPSRDLDKVCTMHANCCVGLENKIKDLRQVIVDWENYVSAAKTTDGQIMTWRDPENCMKQWWWRNKTKQVLSENSKENYLNIMLFIKTYIILNFCLPMNNIRKFFFCFGSIFVNR.

This is an uncharacterized protein from Arabidopsis thaliana (Mouse-ear cress).